The primary structure comprises 1131 residues: MLHVSASKNMTEYFKSILNDVNNLYFIAEECRKLGYDVVDKVEIPLAKDMADRVEGIVGPPKVSERIRELVMELGKEPAALEIAKEIVEGRFGEFGKEEGAEQAVRTALAVITEGIVAAPLEGIAHVKIKKNHDGTEYLAIYFAGPIRSAGGTAQALAVLVGDYVRKNMNLDKFKPTDDEVERYGEEIDLYQSEVTTFQYQPKIEEIRTAVRNISVEITGEATDDVEVSGHRDLERVETNQIRGGALLALVEGVLLKAPKILRHVDKLEIEGWNWLKELKNKKEEINEDIKDEKEDFNYEEEEDLSQYDDCEIEEVTKFIGEVIAGRPVFAHPSKKGGFRLRYGRSRNTGFATDGFHPAIMYLVDDFMAVGTQLKTERPGKATCVVPVDSIDPPIVKLNNHSVLKIDTVEKAIKYRKDVLEILFLGDILVNYGDFLENNHVMLPSSWCVEWYEKILKVNNIPYSTEFISNPSPKEAVKFAITTKTPLHPVYTYHWHDISKENIYSLRNWILRGNFNKNSDKWEISYDLENPEDISNKRFLELIGCCHEVVDGKIFILEYYPLLYSLGYDYENSFDSVENLEEKVSNAKNNMHLINLLSHFEIRRNTYIYVGARMGRPEKAASRKMKPPVNGLFPIGNAGALVRLINKAVEGGKTDEIEISNVMCSCGKVSLYKKCPFCGKSVIPTGPTRIKLPIKDYWYNALENLKINKPGDVKCIKGMTSKDKIIEPLEKAILRAVNDVYVFKDGTTRFDCTDVPVTHFKPCEINVSVNRLKELGYLRDINGNSLENDKQVLELKVQDVIVPESCMDYFLNVSKFIDDLLEKYYKKNRYYNSSNKEDLVGHLIIGMAPHTSAGMVGRIVGYSKANVGYAHPYFHASKRRNCDGDEDAFFLLLDAFLNFSKKFLPDKRGGQMDAPLVLTTILDPKEVDGEVHNMDSMWEYPLEFYEKSLEMVTPKEIKKLMETVEDRLGKDEQYEGIGYTHETLKIDEGPLICSYKTLGSMMDKTSAQLAVAKKIRATDERDVAEKVIQSHFVPDLIGNLRAFSRQGVRCKCGAKYRRIPLKGVCRKCGSRLILTVSKGAVEKYMNVSQTMAEKYNVSDYIKQRLEIIRSGIDSLFTNDKRKQVKIEDFFK.

Belongs to the archaeal DNA polymerase II family. Heterodimer of a large subunit and a small subunit.

The enzyme catalyses DNA(n) + a 2'-deoxyribonucleoside 5'-triphosphate = DNA(n+1) + diphosphate. It catalyses the reaction Exonucleolytic cleavage in the 3'- to 5'-direction to yield nucleoside 5'-phosphates.. In terms of biological role, possesses two activities: a DNA synthesis (polymerase) and an exonucleolytic activity that degrades single-stranded DNA in the 3'- to 5'-direction. Has a template-primer preference which is characteristic of a replicative DNA polymerase. This Methanococcus vannielii (strain ATCC 35089 / DSM 1224 / JCM 13029 / OCM 148 / SB) protein is DNA polymerase II large subunit.